Reading from the N-terminus, the 353-residue chain is Phosphate acyltransferase (353 aa).

The protein belongs to the PlsX family. As to quaternary structure, homodimer. Probably interacts with PlsY.

The protein resides in the cytoplasm. It catalyses the reaction a fatty acyl-[ACP] + phosphate = an acyl phosphate + holo-[ACP]. The protein operates within lipid metabolism; phospholipid metabolism. Functionally, catalyzes the reversible formation of acyl-phosphate (acyl-PO(4)) from acyl-[acyl-carrier-protein] (acyl-ACP). This enzyme utilizes acyl-ACP as fatty acyl donor, but not acyl-CoA. In Myxococcus xanthus (strain DK1622), this protein is Phosphate acyltransferase.